The sequence spans 86 residues: Mu-theraphotoxin-Hhn1b 3 (86 aa).

Positions 1-21 are cleaved as a signal peptide; the sequence is MKASMFLALTGLALLFVVCYA. Residues 22–49 constitute a propeptide that is removed on maturation; it reads SESEEKEFSNELLSSVLAVDDNSKGEER. 3 cysteine pairs are disulfide-bonded: C51–C66, C58–C73, and C65–C80. At I84 the chain carries Isoleucine amide.

Belongs to the neurotoxin 10 (Hwtx-1) family. 22 (Htx-4) subfamily. In terms of assembly, monomer. As to expression, expressed by the venom gland.

It is found in the secreted. Functionally, neurotoxin. Selectively blocks neuronal tetrodotoxin-sensitive voltage-gated sodium channels (Nav) with an IC(50) of 44.6 nM. Does not affect tetrodotoxin-resistant voltage-gated sodium channels or calcium channels. In Cyriopagopus hainanus (Chinese bird spider), this protein is Mu-theraphotoxin-Hhn1b 3.